Reading from the N-terminus, the 127-residue chain is Nitrogenase-stabilizing/protective protein NifW (127 aa).

This sequence belongs to the NifW family. As to quaternary structure, homotrimer; associates with NifD.

Its function is as follows. May protect the nitrogenase Fe-Mo protein from oxidative damage. This chain is Nitrogenase-stabilizing/protective protein NifW, found in Rhizobium etli (strain ATCC 51251 / DSM 11541 / JCM 21823 / NBRC 15573 / CFN 42).